The sequence spans 422 residues: Glycine amidinotransferase, mitochondrial (422 aa).

The N-terminal 37 residues, 1 to 37, are a transit peptide targeting the mitochondrion; it reads MLRVRCLRGGSRGAEAVHYIGSMLRKSFVGWVQRSFQ. Residues aspartate 253 and histidine 302 contribute to the active site. Cysteine 406 (amidino-cysteine intermediate) is an active-site residue.

Belongs to the amidinotransferase family. Homodimer. In terms of tissue distribution, ubiquitously expressed in adult tissues, with highest levels in muscle and intermediate levels in eye, heart, liver, stomach and testis. In stage 28 embryos, expression is higher in the dorsal and ventral parts of the trunk than in the head. In middle gastrulae, expression is highest around the yolk plug, while in stage 15 and tailbud stage embryos, expression is largely restricted to the region around the presumptive notochord and gut.

Its subcellular location is the mitochondrion inner membrane. The catalysed reaction is L-arginine + glycine = guanidinoacetate + L-ornithine. Its pathway is amine and polyamine biosynthesis; creatine biosynthesis; creatine from L-arginine and glycine: step 1/2. Functionally, catalyzes the biosynthesis of guanidinoacetate, the immediate precursor of creatine. Creatine plays a vital role in energy metabolism in muscle tissues. May play a role in embryonic and central nervous system development. This is Glycine amidinotransferase, mitochondrial from Xenopus laevis (African clawed frog).